The sequence spans 483 residues: Glutamate mutase epsilon subunit (483 aa).

L-glutamate is bound at residue Arg-66. Gly-68 is a binding site for adenosylcob(III)alamin. Arg-100 contacts L-glutamate. Asn-123 contributes to the adenosylcob(III)alamin binding site. Residues 149–150, Glu-171, and Tyr-177 each bind L-glutamate; that span reads RH. Residue Pro-180 participates in adenosylcob(III)alamin binding. Tyr-181 contacts L-glutamate. The adenosylcob(III)alamin site is built by Phe-297, Lys-326, Glu-330, and Ile-334.

The protein belongs to the methylaspartate mutase GlmE subunit family. Heterotetramer composed of 2 epsilon subunits (GlmE) and 2 sigma subunits (GlmS). GlmE exists as a homodimer and GlmS as a monomer. Adenosylcob(III)alamin serves as cofactor.

It catalyses the reaction (2S,3S)-3-methyl-L-aspartate = L-glutamate. It functions in the pathway amino-acid degradation; L-glutamate degradation via mesaconate pathway; acetate and pyruvate from L-glutamate: step 1/4. Competitively inhibited by (2S,4S)-4-fluoroglutamate, 2-methyleneglutarate, (2R,3RS)-3-fluoroglutamate and (S)-3-methylitaconate. Catalyzes the carbon skeleton rearrangement of L-glutamate to L-threo-3-methylaspartate ((2S,3S)-3-methylaspartate). This is Glutamate mutase epsilon subunit from Clostridium cochlearium.